The following is a 116-amino-acid chain: Flagellar transcriptional regulator FlhD (116 aa).

It belongs to the FlhD family. In terms of assembly, homodimer; disulfide-linked. Forms a heterohexamer composed of two FlhC and four FlhD subunits. Each FlhC binds a FlhD dimer, forming a heterotrimer, and a hexamer assembles by dimerization of two heterotrimers.

It localises to the cytoplasm. In terms of biological role, functions in complex with FlhC as a master transcriptional regulator that regulates transcription of several flagellar and non-flagellar operons by binding to their promoter region. Activates expression of class 2 flagellar genes, including fliA, which is a flagellum-specific sigma factor that turns on the class 3 genes. Also regulates genes whose products function in a variety of physiological pathways. The protein is Flagellar transcriptional regulator FlhD of Serratia proteamaculans (strain 568).